The primary structure comprises 60 residues: Large ribosomal subunit protein uL30 (60 aa).

Belongs to the universal ribosomal protein uL30 family. Part of the 50S ribosomal subunit.

This Paraburkholderia phytofirmans (strain DSM 17436 / LMG 22146 / PsJN) (Burkholderia phytofirmans) protein is Large ribosomal subunit protein uL30.